Consider the following 294-residue polypeptide: Acetyl-coenzyme A carboxylase carboxyl transferase subunit beta (294 aa).

In terms of domain architecture, CoA carboxyltransferase N-terminal spans 30-294; the sequence is IMTKCPECKK…PETGGESDGE (265 aa). Residues C34, C37, C53, and C56 each contribute to the Zn(2+) site. A C4-type zinc finger spans residues 34 to 56; sequence CPECKKIMYTKELQKNLMVCNYC.

The protein belongs to the AccD/PCCB family. As to quaternary structure, acetyl-CoA carboxylase is a heterohexamer composed of biotin carboxyl carrier protein (AccB), biotin carboxylase (AccC) and two subunits each of ACCase subunit alpha (AccA) and ACCase subunit beta (AccD). Zn(2+) is required as a cofactor.

The protein resides in the cytoplasm. The enzyme catalyses N(6)-carboxybiotinyl-L-lysyl-[protein] + acetyl-CoA = N(6)-biotinyl-L-lysyl-[protein] + malonyl-CoA. The protein operates within lipid metabolism; malonyl-CoA biosynthesis; malonyl-CoA from acetyl-CoA: step 1/1. Its function is as follows. Component of the acetyl coenzyme A carboxylase (ACC) complex. Biotin carboxylase (BC) catalyzes the carboxylation of biotin on its carrier protein (BCCP) and then the CO(2) group is transferred by the transcarboxylase to acetyl-CoA to form malonyl-CoA. The sequence is that of Acetyl-coenzyme A carboxylase carboxyl transferase subunit beta from Listeria welshimeri serovar 6b (strain ATCC 35897 / DSM 20650 / CCUG 15529 / CIP 8149 / NCTC 11857 / SLCC 5334 / V8).